Here is a 328-residue protein sequence, read N- to C-terminus: Ribosomal RNA large subunit methyltransferase F (328 aa).

The tract at residues 1-38 (MTDTPKPPRKKPQRPAKPAAPREKATLHPRNRHQGHYD) is disordered.

It belongs to the methyltransferase superfamily. METTL16/RlmF family.

The protein localises to the cytoplasm. The enzyme catalyses adenosine(1618) in 23S rRNA + S-adenosyl-L-methionine = N(6)-methyladenosine(1618) in 23S rRNA + S-adenosyl-L-homocysteine + H(+). Specifically methylates the adenine in position 1618 of 23S rRNA. The sequence is that of Ribosomal RNA large subunit methyltransferase F from Pseudomonas syringae pv. tomato (strain ATCC BAA-871 / DC3000).